The primary structure comprises 152 residues: MMEYKKIIAQNKKALFNYFIEERLEAGIVLKGSEVQSLRQGKASIEESHAADTGNEVFLYNCHIAEYEKANRFNHSTRRPRKLLLHKKEINKIIGRTKIKGYTLVALSMYFNKKNKIKIELGIAKGKKLHDKRESIKEKDWKRDQSRLIRQK.

This sequence belongs to the SmpB family.

It localises to the cytoplasm. Required for rescue of stalled ribosomes mediated by trans-translation. Binds to transfer-messenger RNA (tmRNA), required for stable association of tmRNA with ribosomes. tmRNA and SmpB together mimic tRNA shape, replacing the anticodon stem-loop with SmpB. tmRNA is encoded by the ssrA gene; the 2 termini fold to resemble tRNA(Ala) and it encodes a 'tag peptide', a short internal open reading frame. During trans-translation Ala-aminoacylated tmRNA acts like a tRNA, entering the A-site of stalled ribosomes, displacing the stalled mRNA. The ribosome then switches to translate the ORF on the tmRNA; the nascent peptide is terminated with the 'tag peptide' encoded by the tmRNA and targeted for degradation. The ribosome is freed to recommence translation, which seems to be the essential function of trans-translation. This chain is SsrA-binding protein, found in Rickettsia bellii (strain RML369-C).